Consider the following 501-residue polypeptide: L-ornithine N(5)-monooxygenase (501 aa).

Residues methionine 1–asparagine 16 are compositionally biased toward low complexity. The interval methionine 1–proline 40 is disordered. The segment covering proline 26 to glutamine 37 has biased composition (polar residues). FAD is bound by residues glutamate 92 to histidine 100 and glutamine 111. A substrate-binding site is contributed by lysine 116. Valine 177 provides a ligand contact to FAD. Residue serine 263–serine 266 participates in NADP(+) binding. Substrate-binding positions include asparagine 304–phenylalanine 307 and asparagine 334. Residue asparagine 334–serine 336 coordinates NADP(+). Serine 476–leucine 478 contributes to the FAD binding site. Serine 479 serves as a coordination point for substrate.

Belongs to the lysine N(6)-hydroxylase/L-ornithine N(5)-oxygenase family. In terms of assembly, homotetramer. The cofactor is FAD.

It catalyses the reaction L-ornithine + NADPH + O2 = N(5)-hydroxy-L-ornithine + NADP(+) + H2O. It carries out the reaction L-ornithine + NADH + O2 = N(5)-hydroxy-L-ornithine + NAD(+) + H2O. It functions in the pathway siderophore biosynthesis. Its function is as follows. L-ornithine N(5)-monooxygenase; part of the siderophore biosynthetic pathway. Arthroderma benhamiae produces 2 types of extracellular siderophores, ferrichrome C and ferricrocin. The biosynthesis of these siderophores depends on the hydroxylation of ornithine to N(5)-hydroxyornithine, catalyzed by the monooxygenase sidA. The structure of ferricrocin differs from ferrichrome C only by a serine for alanine substitution and the assembly of both siderophores is suggested to be performed by the nonribosomal peptide synthase (NRPS) sidC. The chain is L-ornithine N(5)-monooxygenase from Arthroderma benhamiae (strain ATCC MYA-4681 / CBS 112371) (Trichophyton mentagrophytes).